The primary structure comprises 393 residues: MIETDILVVGAGPSGSLAAKEAALHGADVILIDRKSEIGSPKRCAEGVSKDGLAQLGIKPDPRWIARDLYGVRLVSPNNTSVWMDNNTIKIPEAGYILERKVFDKHMAMDAARAGAKIMIKTNATSLKRVDDGIIVSTNHMGKDIDIHAKIVIAADGPESRIGRWAGLECNTEFKYMESCIQFEMAGVNMENNRDIALFFGSVAPGGYVWIFPKGDDIANVGIGVLKNKTNKTAYEHLMEFIKTCPETKDAQPVEINVGGDPVGGIIKDRIGDNILVVGDAAGFVNSLTGGGINSALESGVYAGIVAAQAIKDGDYSKNNLKEYVSLTDEHIGKHYKKYNKAKEYLLSLEDEELDEIAEEFAKADFEEVNPRTLIKMLIKVSPKALVKLGKLF.

Residues D33, C44, A45, G47, R100, A124, D280, G292, and I293 each contribute to the FAD site.

This sequence belongs to the geranylgeranyl reductase family. DGGGPL reductase subfamily. FAD is required as a cofactor.

It catalyses the reaction a 2,3-bis-O-phytanyl-sn-glycerol 1-phospholipid + 8 A = a 2,3-bis-O-(geranylgeranyl)-sn-glycerol 1-phospholipid + 8 AH2. It carries out the reaction 2,3-bis-O-(phytanyl)-sn-glycerol 1-phosphate + 8 A = 2,3-bis-O-(geranylgeranyl)-sn-glycerol 1-phosphate + 8 AH2. The enzyme catalyses CDP-2,3-bis-O-(geranylgeranyl)-sn-glycerol + 8 AH2 = CDP-2,3-bis-O-(phytanyl)-sn-glycerol + 8 A. The catalysed reaction is archaetidylserine + 8 AH2 = 2,3-bis-O-phytanyl-sn-glycero-3-phospho-L-serine + 8 A. Its pathway is membrane lipid metabolism; glycerophospholipid metabolism. In terms of biological role, is involved in the reduction of 2,3-digeranylgeranylglycerophospholipids (unsaturated archaeols) into 2,3-diphytanylglycerophospholipids (saturated archaeols) in the biosynthesis of archaeal membrane lipids. Catalyzes the formation of archaetidic acid (2,3-di-O-phytanyl-sn-glyceryl phosphate) from 2,3-di-O-geranylgeranylglyceryl phosphate (DGGGP) via the hydrogenation of each double bond of the isoprenoid chains. Is also probably able to reduce double bonds of geranyl groups in CDP-2,3-bis-O-(geranylgeranyl)-sn-glycerol and archaetidylserine, thus acting at various stages in the biosynthesis of archaeal membrane lipids. The chain is Digeranylgeranylglycerophospholipid reductase 2 from Methanosphaera stadtmanae (strain ATCC 43021 / DSM 3091 / JCM 11832 / MCB-3).